Consider the following 1167-residue polypeptide: Pesticidal crystal protein Cry21Aa (1167 aa).

This sequence belongs to the delta endotoxin family.

Endotoxin with nematicidal activity. The protein is Pesticidal crystal protein Cry21Aa (cry21Aa) of Bacillus thuringiensis.